We begin with the raw amino-acid sequence, 480 residues long: Histone deacetylase 1 (480 aa).

Positions 9–321 are histone deacetylase; it reads RKVCYYYDGD…WTYETAVALD (313 aa). 1D-myo-inositol 1,4,5,6-tetrakisphosphate contacts are provided by Gly27 and Lys31. The active site involves His141. Asp176, His178, and Asp264 together coordinate Zn(2+). Arg270 lines the 1D-myo-inositol 1,4,5,6-tetrakisphosphate pocket. Residues 376 to 480 form a disordered region; it reads APGVQMQPIP…KGVKEETKST (105 aa). Residues 388–400 are compositionally biased toward acidic residues; it reads AVQEDSGDEEEED. A compositionally biased stretch (basic and acidic residues) spans 401-416; it reads PEKRISIRNSDKRISC. Residues 417 to 427 show a composition bias toward acidic residues; the sequence is DEEFSDSEDEG. The segment covering 455–480 has biased composition (basic and acidic residues); sequence KDEKEEEKAKEEKAEPKGVKEETKST.

Belongs to the histone deacetylase family. HD type 1 subfamily. Requires Zn(2+) as cofactor.

Its subcellular location is the nucleus. The enzyme catalyses N(6)-acetyl-L-lysyl-[histone] + H2O = L-lysyl-[histone] + acetate. It carries out the reaction N(6)-acetyl-L-lysyl-[protein] + H2O = L-lysyl-[protein] + acetate. It catalyses the reaction N(6)-(2E)-butenoyl-L-lysyl-[protein] + H2O = (2E)-2-butenoate + L-lysyl-[protein]. The catalysed reaction is N(6)-[(S)-lactoyl]-L-lysyl-[protein] + H2O = (S)-lactate + L-lysyl-[protein]. Inositol tetraphosphate (1D-myo-inositol 1,4,5,6-tetrakisphosphate) may act as an intermolecular glue between HDAC1 and N-Cor repressor complex components. Histone deacetylase that catalyzes the deacetylation of lysine residues on the N-terminal part of the core histones (H2A, H2B, H3 and H4). Histone deacetylation gives a tag for epigenetic repression and plays an important role in transcriptional regulation, cell cycle progression and developmental events. Histone deacetylases act via the formation of large multiprotein complexes. Also functions as a deacetylase for non-histone proteins. In addition to protein deacetylase activity, also has protein-lysine deacylase activity: acts as a protein decrotonylase and delactylase by mediating decrotonylation ((2E)-butenoyl) and delactylation (lactoyl) of histones, respectively. This is Histone deacetylase 1 (HDAC1) from Gallus gallus (Chicken).